We begin with the raw amino-acid sequence, 216 residues long: Redox-sensing transcriptional repressor Rex 1 (216 aa).

A DNA-binding region (H-T-H motif) is located at residues 16-55 (LYYRYLRMLHDTGKNKVSSTELSEAVQVDSATIRRDFSYF). 90 to 95 (GVGNLG) provides a ligand contact to NAD(+).

The protein belongs to the transcriptional regulatory Rex family. In terms of assembly, homodimer.

The protein resides in the cytoplasm. Modulates transcription in response to changes in cellular NADH/NAD(+) redox state. In Enterococcus faecalis (strain ATCC 700802 / V583), this protein is Redox-sensing transcriptional repressor Rex 1.